The chain runs to 168 residues: 6,7-dimethyl-8-ribityllumazine synthase (168 aa).

5-amino-6-(D-ribitylamino)uracil is bound by residues Phe24, 58 to 60 (ALE), and 82 to 84 (AVI). 87-88 (ET) contributes to the (2S)-2-hydroxy-3-oxobutyl phosphate binding site. His90 serves as the catalytic Proton donor. Asn115 provides a ligand contact to 5-amino-6-(D-ribitylamino)uracil. Arg129 serves as a coordination point for (2S)-2-hydroxy-3-oxobutyl phosphate.

This sequence belongs to the DMRL synthase family.

The enzyme catalyses (2S)-2-hydroxy-3-oxobutyl phosphate + 5-amino-6-(D-ribitylamino)uracil = 6,7-dimethyl-8-(1-D-ribityl)lumazine + phosphate + 2 H2O + H(+). It participates in cofactor biosynthesis; riboflavin biosynthesis; riboflavin from 2-hydroxy-3-oxobutyl phosphate and 5-amino-6-(D-ribitylamino)uracil: step 1/2. In terms of biological role, catalyzes the formation of 6,7-dimethyl-8-ribityllumazine by condensation of 5-amino-6-(D-ribitylamino)uracil with 3,4-dihydroxy-2-butanone 4-phosphate. This is the penultimate step in the biosynthesis of riboflavin. This is 6,7-dimethyl-8-ribityllumazine synthase from Paraburkholderia xenovorans (strain LB400).